The primary structure comprises 106 residues: Large ribosomal subunit protein eL42 (106 aa).

Positions 1 to 29 (MVNIPKTRRTYCKGKACRKHTPHKVTQYK) are enriched in basic residues. The disordered stretch occupies residues 1-56 (MVNIPKTRRTYCKGKACRKHTPHKVTQYKKGKDSLSAQGKRRYDRKQSGYGGQTKP).

This sequence belongs to the eukaryotic ribosomal protein eL42 family.

This is Large ribosomal subunit protein eL42 (RPL44) from Cryptococcus neoformans var. neoformans serotype D (strain B-3501A) (Filobasidiella neoformans).